The chain runs to 345 residues: Small ribosomal subunit protein mS45 (345 aa).

A mitochondrion-targeting transit peptide spans Met-1 to Phe-27.

This sequence belongs to the mitochondrion-specific ribosomal protein mS45 family. In terms of assembly, component of the mitochondrial small ribosomal subunit (mt-SSU). Mature yeast 74S mitochondrial ribosomes consist of a small (37S) and a large (54S) subunit. The 37S small subunit contains a 15S ribosomal RNA (15S mt-rRNA) and 34 different proteins. The 54S large subunit contains a 21S rRNA (21S mt-rRNA) and 46 different proteins.

The protein localises to the mitochondrion. Its function is as follows. Component of the mitochondrial ribosome (mitoribosome), a dedicated translation machinery responsible for the synthesis of mitochondrial genome-encoded proteins, including at least some of the essential transmembrane subunits of the mitochondrial respiratory chain. The mitoribosomes are attached to the mitochondrial inner membrane and translation products are cotranslationally integrated into the membrane. The polypeptide is Small ribosomal subunit protein mS45 (MRPS35) (Saccharomyces cerevisiae (strain ATCC 204508 / S288c) (Baker's yeast)).